Here is a 1153-residue protein sequence, read N- to C-terminus: Nitric oxide synthase (1153 aa).

Residue Ser3 coordinates (6R)-L-erythro-5,6,7,8-tetrahydrobiopterin. Cys82 lines the heme b pocket. Residues Gln145, Trp254, and Asn264 each contribute to the L-arginine site. Phe358 contacts (6R)-L-erythro-5,6,7,8-tetrahydrobiopterin. A calmodulin-binding region spans residues 397 to 417 (PKRKLGFKALARAVEFSASLM). The Flavodoxin-like domain occupies 427–610 (CSIFYATETG…SFRAWSEEVF (184 aa)). FMN is bound at residue 556–587 (VFGLGSKAYPYYAAYGKYIYLMLQELGAERLV). An FAD-binding FR-type domain is found at 660 to 903 (KEVMPLILAE…LRSAPHFHLP (244 aa)). FAD-binding positions include 697-708 (YAPGDHVAIFPA) and 836-846 (LQPRYYSISSS). Residue 911 to 929 (IMIGPGSGIAPFRSFWQQR) coordinates NADP(+). Tandem repeats lie at residues 934–940 (ENTMPSC), 941–947 (ENTMLSC), 948–954 (ETTIPSC), 955–961 (ENSMPSC), 962–968 (ENTMPSC), 969–975 (ENTMPSC), 976–982 (ENTIPSC), 983–989 (ENTIPSC), 990–996 (ENTMPSC), 997–1003 (ENTIPSW), and 1004–1010 (ERTMQPC). Residues 934-1010 (ENTMPSCENT…PSWERTMQPC (77 aa)) form an 11 X 7 AA tandem repeats of E-[NTR]-[ST]-[IM]-[PLQ]-[SP]-[CW] region. 1089 to 1104 (GGHFYVSGDVSMAHDV) provides a ligand contact to NADP(+).

This sequence belongs to the NOS family. It depends on heme b as a cofactor. FAD serves as cofactor. The cofactor is FMN. Expressed in the central nervous system, in the serotonergic cerebral giant cells. The isoform Long and isoform Short are expressed equally in the CNS.

The enzyme catalyses 2 L-arginine + 3 NADPH + 4 O2 + H(+) = 2 L-citrulline + 2 nitric oxide + 3 NADP(+) + 4 H2O. With respect to regulation, stimulated by calcium/calmodulin. Its function is as follows. Produces nitric oxide (NO) which is a messenger molecule with diverse functions throughout the body. The polypeptide is Nitric oxide synthase (NOS) (Lymnaea stagnalis (Great pond snail)).